We begin with the raw amino-acid sequence, 138 residues long: Nucleoside diphosphate kinase (138 aa).

The ATP site is built by K9, F57, R85, T91, R102, and N112. The Pros-phosphohistidine intermediate role is filled by H115.

The protein belongs to the NDK family. In terms of assembly, homotetramer. Mg(2+) serves as cofactor.

Its subcellular location is the cytoplasm. It carries out the reaction a 2'-deoxyribonucleoside 5'-diphosphate + ATP = a 2'-deoxyribonucleoside 5'-triphosphate + ADP. The enzyme catalyses a ribonucleoside 5'-diphosphate + ATP = a ribonucleoside 5'-triphosphate + ADP. In terms of biological role, major role in the synthesis of nucleoside triphosphates other than ATP. The ATP gamma phosphate is transferred to the NDP beta phosphate via a ping-pong mechanism, using a phosphorylated active-site intermediate. The polypeptide is Nucleoside diphosphate kinase (Desulfatibacillum aliphaticivorans).